Here is a 237-residue protein sequence, read N- to C-terminus: MAFPPSPLAMEYVNDFDLMKFEIKREPSEGRSGVPTASLGSTPYSSVPPSPTFSEPGMVGGGEAPRPGLEELYWLATLQQQLGSDEVLGLSPDEAVELLQNQGPVSMEGPLGYYSGSPGETGAQHVQLPERFSDAALVSMSVRELNRQLRGCGRDEALRLKQRRRTLKNRGYAQACRSKRLQQRRGLEAERARLAAQLDALRAEVARLARERDLYKARCDRLTSGGPGSDDHTHLFL.

Glycyl lysine isopeptide (Lys-Gly) (interchain with G-Cter in SUMO) cross-links involve residues K20 and K24. The tract at residues 26 to 64 is disordered; sequence EPSEGRSGVPTASLGSTPYSSVPPSPTFSEPGMVGGGEA. Residues 30–93 are minimal transactivation domain (MTD); sequence GRSGVPTASL…SDEVLGLSPD (64 aa). The segment at 159–185 is basic motif; it reads RLKQRRRTLKNRGYAQACRSKRLQQRR. The bZIP domain maps to 159–222; sequence RLKQRRRTLK…DLYKARCDRL (64 aa). Positions 187–208 are leucine-zipper; it reads LEAERARLAAQLDALRAEVARL.

This sequence belongs to the bZIP family. As to quaternary structure, interacts with FIZ1; this interaction represses transactivation. Interacts (via the leucine-zipper domain) with CRX. Disumoylated at Lys-20. Sumoylation modulates the transcriptional activity of NRL on RHO and NR2E3 promoters, and is required for normal rod differentiation. Post-translationally, phosphorylated. In terms of tissue distribution, expressed in the retina (at protein level).

It is found in the cytoplasm. The protein resides in the nucleus. Acts as a transcriptional activator which regulates the expression of several rod-specific genes, including RHO and PDE6B. Also functions as a transcriptional coactivator, stimulating transcription mediated by the transcription factor CRX and NR2E3. Binds to the rhodopsin promoter in a sequence-specific manner. The chain is Neural retina-specific leucine zipper protein (Nrl) from Mus musculus (Mouse).